An 82-amino-acid polypeptide reads, in one-letter code: Ice-structuring protein B (82 aa).

A signal peptide spans 1–23; sequence MALSLFTVGQLIFLFWTMRITEA. The propeptide at 24 to 44 is removed by a dipeptidylpeptidase; that stretch reads RPDPAAKAAPAAAAVPAAAAP. Arginine amide is present on Arg-81.

Belongs to the type-I AFP family. In terms of processing, amidated. Detected in liver (at protein level).

The protein resides in the secreted. It localises to the extracellular space. In terms of biological role, contributes to protect fish blood from freezing at subzero sea water temperatures. Lowers the blood freezing point. Binds to nascent ice crystals and prevents further growth. This is Ice-structuring protein B from Pseudopleuronectes americanus (Winter flounder).